The primary structure comprises 274 residues: Dehydration-responsive element-binding protein 2A (274 aa).

2 stretches are compositionally biased toward basic and acidic residues: residues 1 to 10 and 35 to 50; these read MERGEGRRGD and KWWKEQNQKLQEENSS. Positions 1–75 are disordered; it reads MERGEGRRGD…KGGPENSNCA (75 aa). Positions 75–132 form a DNA-binding region, AP2/ERF; it reads AYRGVRQRTWGKWVAEIREPNRGRRLWLGSFPTALEAAHAYDEAARAMYGPTARVNFA.

It belongs to the AP2/ERF transcription factor family. ERF subfamily.

Its subcellular location is the nucleus. Its function is as follows. Transcriptional activator that binds specifically to the DNA sequence 5'-[AG]CCGAC-3'. Binding to the C-repeat/DRE element mediates high salinity- and dehydration-inducible transcription. The polypeptide is Dehydration-responsive element-binding protein 2A (DREB2A) (Oryza sativa subsp. indica (Rice)).